Consider the following 363-residue polypeptide: MSPKNITRSVIPAIDLYCRKANFKTLKSLSMILGSKKEWYDTKKAPLRTFLVSRCGIFEQLRGRLVEDGKVNLFSVFLTNDSFSFCKMTVDDKFNTSLVDWQKIPFDSTFATDRRQNISLLPVDTLFATEKIISILGVSPNMTNLVSIERERSDLVDFNCKLQSNILEHLLYAKCQGVYVTSTNEKARLLAAVCNPEFIDTFWCELTPIRVSLKENPSISVPREYQMYDPVVRATIKEVVTKRLLRSAFDNDIDPLMCLHLDKGWKLKFPILSSTTGLNFSLKDCLSLDTGKDASDMTEVFLATMESSKVLRTYSNLVDIVMKDNGRLDSGVLKQFNDYVKQEKLNLQHFQAGSSKFLKGAKI.

In terms of assembly, homodimer. Forms a ribonucleoprotein complex composed of maturase bI3 and 2 dimers of MRS1 that assemble around the bI3 RNA.

It is found in the mitochondrion matrix. Its function is as follows. Function in mitochondrial RNA splicing in the excision of mitochondrial group I introns aI5 beta from COX1 and bI3 from COB transcripts and thus would be involved in obtaining the correct structure of the intron, to allow the RNA catalyzed reactions to occur. The polypeptide is Mitochondrial RNA-splicing protein MRS1 (MRS1) (Saccharomyces cerevisiae (strain ATCC 204508 / S288c) (Baker's yeast)).